The sequence spans 610 residues: Dopamine beta-hydroxylase (610 aa).

The Cytoplasmic portion of the chain corresponds to 1 to 9 (MKVPSPSVR). Residues 10-30 (EAASMYGTAVAIFLVILVAAL) traverse the membrane as a helical; Signal-anchor for type II membrane protein segment. Residues 31 to 610 (QGSEPPESPF…TVVDIGGGKG (580 aa)) are Intragranular-facing. Positions 50–166 (GTLELSWNVS…GTVHLVYGIL (117 aa)) constitute a DOMON domain. N-linked (GlcNAc...) asparagine glycosylation is found at N57, N177, and N194. 6 cysteine pairs are disulfide-bonded: C147–C589, C225–C276, C262–C288, C383–C496, C387–C558, and C459–C481. The active site involves Y223. H255 and H256 together coordinate Cu(2+). H326, H405, H407, and M480 together coordinate Cu(2+). The active site involves H405. Residues 586–610 (TPRCPASRGRSPAGPTVVDIGGGKG) form a disordered region.

Belongs to the copper type II ascorbate-dependent monooxygenase family. Homotetramer; composed of two disulfide-linked dimers. Cu(2+) serves as cofactor. Proteolytic cleavage after the membrane-anchor leads to the release of the soluble form. In terms of processing, N-glycosylated. In terms of tissue distribution, detected in adrenal medulla chromaffin cells.

The protein localises to the cytoplasmic vesicle. Its subcellular location is the secretory vesicle lumen. The protein resides in the secretory vesicle. It is found in the chromaffin granule lumen. It localises to the secreted. The protein localises to the secretory vesicle membrane. Its subcellular location is the chromaffin granule membrane. It catalyses the reaction dopamine + 2 L-ascorbate + O2 = (R)-noradrenaline + 2 monodehydro-L-ascorbate radical + H2O. It participates in catecholamine biosynthesis; (R)-noradrenaline biosynthesis; (R)-noradrenaline from dopamine: step 1/1. In terms of biological role, catalyzes the hydroxylation of dopamine to noradrenaline (also known as norepinephrine), and is thus vital for regulation of these neurotransmitters. The polypeptide is Dopamine beta-hydroxylase (DBH) (Equus caballus (Horse)).